Reading from the N-terminus, the 277-residue chain is Protein OPG166 (277 aa).

2 N-linked (GlcNAc...) asparagine; by host glycosylation sites follow: asparagine 29 and asparagine 58. Helical transmembrane passes span 124 to 144 (TMLMFIFTGITLFLLFLEIAY), 156 to 176 (GILQVFGCVIAMIELCGAFLF), 186 to 206 (IIGLLMMTLPSIFLIITKVFS), 219 to 239 (LIIYYQLAGYILTVLGLGLSL), and 247 to 267 (LLLSGLGTIMVSEHFGLLFLV).

This sequence belongs to the orthopoxvirus OPG166 protein family.

Its subcellular location is the host membrane. Functionally, promotes, when overexpressed, the influx of extracellular Ca(2+), leading to membrane permeability and host cell necrosis. This Cynomys gunnisoni (Gunnison's prairie dog) protein is Protein OPG166 (OPG166).